The primary structure comprises 903 residues: FIGNL1-interacting regulator of recombination and mitosis (903 aa).

Phosphoserine occurs at positions 101 and 795. K843 carries the N6-acetyllysine modification.

Interacts (via its N-terminal region) with PLK1; controls PLK1 kinase activity. Interacts (via the KVVXF motif) with PPP1CC; controls PLK1 kinase activity. Interacts with FIGNL1; may regulate homologous recombination. Phosphorylation at Ser-101 by PLK1 strengthens FIRRM-PLK1 interaction. Phosphorylation at Ser-795 by PLK1 negatively regulates its interaction with PPP1CC.

Its subcellular location is the chromosome. It is found in the centromere. The protein resides in the kinetochore. The protein localises to the nucleus. It localises to the midbody. Its subcellular location is the cytoplasm. It is found in the cytoskeleton. The protein resides in the spindle. Regulates PLK1 kinase activity at kinetochores and promotes faithful chromosome segregation in prometaphase by bridging kinase and phosphatase activities. Phosphorylation of FIRRM by PLK1 negatively regulates its interaction with the phosphatase, PPP1CC, thus creating a negative feedback loop for maintaining proper PLK1 kinase activity during mitosis. In complex with FIGL1 may regulate homologous recombination. The polypeptide is FIGNL1-interacting regulator of recombination and mitosis (Mus musculus (Mouse)).